Consider the following 407-residue polypeptide: Glucan 1,3-beta-glucosidase 1 (407 aa).

Positions methionine 1–serine 22 are cleaved as a signal peptide. Glutamate 213 acts as the Proton donor in catalysis. The cysteines at positions 295 and 406 are disulfide-linked. The active-site Nucleophile is glutamate 312.

This sequence belongs to the glycosyl hydrolase 5 (cellulase A) family.

Its subcellular location is the secreted. The catalysed reaction is Successive hydrolysis of beta-D-glucose units from the non-reducing ends of (1-&gt;3)-beta-D-glucans, releasing alpha-glucose.. Its function is as follows. Beta-glucanases participate in the metabolism of beta-glucan, the main structural component of the cell wall. It could also function biosynthetically as a transglycosylase. This Schizosaccharomyces pombe (strain 972 / ATCC 24843) (Fission yeast) protein is Glucan 1,3-beta-glucosidase 1 (exg1).